Consider the following 721-residue polypeptide: Polyribonucleotide nucleotidyltransferase (721 aa).

2 residues coordinate Mg(2+): D495 and D501. The KH domain occupies 562-621 (PRITTIKIRPERIKDIIGPGGKTIKDITARTGTSINIEDDGSVSIASPNQDKVEEAIKMI). An S1 motif domain is found at 631–699 (GRIYLGTVRK…RSGKIRLSRK (69 aa)). The interval 699 to 721 (KEALADSAKKSEGTEPPKGEPAK) is disordered.

It belongs to the polyribonucleotide nucleotidyltransferase family. Requires Mg(2+) as cofactor.

It localises to the cytoplasm. It catalyses the reaction RNA(n+1) + phosphate = RNA(n) + a ribonucleoside 5'-diphosphate. Involved in mRNA degradation. Catalyzes the phosphorolysis of single-stranded polyribonucleotides processively in the 3'- to 5'-direction. The sequence is that of Polyribonucleotide nucleotidyltransferase from Anaeromyxobacter sp. (strain K).